Consider the following 79-residue polypeptide: Small ribosomal subunit protein uS17 (79 aa).

It belongs to the universal ribosomal protein uS17 family. Part of the 30S ribosomal subunit.

Its function is as follows. One of the primary rRNA binding proteins, it binds specifically to the 5'-end of 16S ribosomal RNA. The protein is Small ribosomal subunit protein uS17 of Bartonella quintana (strain Toulouse) (Rochalimaea quintana).